A 551-amino-acid polypeptide reads, in one-letter code: MSEKSREEEKLSFKEQILRDLEKVKGYDEVLKEDEAVVRTPANEPSAEELMADSLSTVEEIMRKAPTVPTHPSQGVPASPADEIQRETPGVPSHPSQDVPSSPAEESGSRPGPGPVRPKKLEREYNETPTRVAVSYTTAEKKAEQAGPETPTPATETVDIIRDTSRRSRREGAKPAKPKKEKKSHVKAFVISFLVFLALLSAGGYFGYQYVLDSLLPIDANSKKYVTVGIPEGSNVQEIGTTLEKAGLVKHGLIFSFYAKYKNYTDLKAGYYNLQKSMSTEDLLKELQKGGTDEPQEPVLATLTIPEGYTLDQIAQTVGQLQGDFKESLTAEAFLAKVQDETFISQAVAKYPTLLESLPVKDSGARYRLEGYLFPATYSIKESTTIESLIDEMLAAMDKNLSPYYSTIKSKNLTVNELLTIASLVEKEGAKTEDRKLIAGVFYNRLNRDMPLQSNIAILYAQGKLGQNISLAEDVAIDTNIDSPYNVYKNVGLMPGPVDSPSLDAIESSINQTKSDNLYFVADVTEGKVYYANNQEDHDRNVAEHVNSKLN.

Residues 1 to 187 (MSEKSREEEK…PKKEKKSHVK (187 aa)) are Cytoplasmic-facing. Residues 38–180 (VRTPANEPSA…EGAKPAKPKK (143 aa)) are disordered. 2 stretches are compositionally biased toward low complexity: residues 100-110 (PSSPAEESGSR) and 145-157 (QAGP…ATET). Basic and acidic residues predominate over residues 159–174 (DIIRDTSRRSRREGAK). A helical transmembrane segment spans residues 188-208 (AFVISFLVFLALLSAGGYFGY). The Extracellular portion of the chain corresponds to 209-551 (QYVLDSLLPI…VAEHVNSKLN (343 aa)).

This sequence belongs to the transglycosylase MltG family.

It is found in the cell membrane. It catalyses the reaction a peptidoglycan chain = a peptidoglycan chain with N-acetyl-1,6-anhydromuramyl-[peptide] at the reducing end + a peptidoglycan chain with N-acetylglucosamine at the non-reducing end.. In terms of biological role, functions as a peptidoglycan terminase that cleaves nascent peptidoglycan strands endolytically to terminate their elongation. Involved in peripheral peptidoglycan (PG) synthesis. This chain is Endolytic murein transglycosylase, found in Streptococcus pneumoniae serotype 2 (strain D39 / NCTC 7466).